The sequence spans 190 residues: Holliday junction branch migration complex subunit RuvA (190 aa).

The tract at residues 1–64 is domain I; it reads MIGRITGTLI…EDAHILYGFA (64 aa). The domain II stretch occupies residues 65-137; it reads TAAERGAFRE…MRGKLGADIG (73 aa). Positions 137–141 are flexible linker; sequence GATAH. A domain III region spans residues 142-190; sequence AVPDSQTDILNALLALGYSDKESQAALKKLPEGTGVSEGIRLALKALVR.

It belongs to the RuvA family. Homotetramer. Forms an RuvA(8)-RuvB(12)-Holliday junction (HJ) complex. HJ DNA is sandwiched between 2 RuvA tetramers; dsDNA enters through RuvA and exits via RuvB. An RuvB hexamer assembles on each DNA strand where it exits the tetramer. Each RuvB hexamer is contacted by two RuvA subunits (via domain III) on 2 adjacent RuvB subunits; this complex drives branch migration. In the full resolvosome a probable DNA-RuvA(4)-RuvB(12)-RuvC(2) complex forms which resolves the HJ.

The protein resides in the cytoplasm. The RuvA-RuvB-RuvC complex processes Holliday junction (HJ) DNA during genetic recombination and DNA repair, while the RuvA-RuvB complex plays an important role in the rescue of blocked DNA replication forks via replication fork reversal (RFR). RuvA specifically binds to HJ cruciform DNA, conferring on it an open structure. The RuvB hexamer acts as an ATP-dependent pump, pulling dsDNA into and through the RuvAB complex. HJ branch migration allows RuvC to scan DNA until it finds its consensus sequence, where it cleaves and resolves the cruciform DNA. The polypeptide is Holliday junction branch migration complex subunit RuvA (Bordetella petrii (strain ATCC BAA-461 / DSM 12804 / CCUG 43448)).